An 804-amino-acid chain; its full sequence is Cas scaffolding protein family member 4 (804 aa).

The SH3 domain maps to 11-73; sequence PKTLLARALY…PANRLQVLRE (63 aa). 2 positions are modified to phosphoserine: Ser-200 and Ser-297. Disordered stretches follow at residues 369–395, 607–628, and 642–686; these read LERG…DSDR, QRET…TEHS, and QQSP…TERK. A compositionally biased stretch (polar residues) spans 380–390; that stretch reads PWISGQTSFLS. The segment covering 649–664 has biased composition (basic and acidic residues); the sequence is EKGKPTMEGKSNRNPD.

This sequence belongs to the CAS family. As to quaternary structure, interacts (via SH3 domain) with PTK2/FAK1 (via C-terminus). Post-translationally, phosphorylated on tyrosines by SRC.

Its subcellular location is the cytoplasm. The protein localises to the cytoskeleton. It localises to the cell junction. The protein resides in the focal adhesion. Docking protein that plays a role in tyrosine kinase-based signaling related to cell adhesion and cell spreading. Regulates PTK2/FAK1 activity, focal adhesion integrity, and cell spreading. The polypeptide is Cas scaffolding protein family member 4 (Mus musculus (Mouse)).